Consider the following 410-residue polypeptide: Inositol hexakisphosphate kinase 3 (410 aa).

211–219 (PCVLDLKMG) lines the substrate pocket. The tract at residues 333-358 (QEPPERAPGSPHPHEAPQAAHGSSPG) is disordered.

It belongs to the inositol phosphokinase (IPK) family. Detected in brain.

It is found in the cytoplasm. It catalyses the reaction 1D-myo-inositol hexakisphosphate + ATP = 5-diphospho-1D-myo-inositol 1,2,3,4,6-pentakisphosphate + ADP. The enzyme catalyses 1-diphospho-1D-myo-inositol 2,3,4,5,6-pentakisphosphate + ATP + H(+) = 1,5-bis(diphospho)-1D-myo-inositol 2,3,4,6-tetrakisphosphate + ADP. Converts inositol hexakisphosphate (InsP6) to diphosphoinositol pentakisphosphate (InsP7/PP-InsP5). Converts 1,3,4,5,6-pentakisphosphate (InsP5) to PP-InsP4. The protein is Inositol hexakisphosphate kinase 3 (IP6K3) of Homo sapiens (Human).